We begin with the raw amino-acid sequence, 414 residues long: Lactosylceramide alpha-2,3-sialyltransferase (414 aa).

Residues 1-65 lie on the Cytoplasmic side of the membrane; it reads MHTEAVGGAA…MRRPSLLIKD (65 aa). A helical; Signal-anchor for type II membrane protein membrane pass occupies residues 66–86; it reads ICKCTLVAFGVWLLYILILNY. At 87 to 414 the chain is on the lumenal side; sequence TAEECDMKRM…VVEDLSGGIH (328 aa). A disulfide bridge connects residues Cys-194 and Cys-352. Asn-235, Asn-279, and Asn-389 each carry an N-linked (GlcNAc...) asparagine glycan.

It belongs to the glycosyltransferase 29 family. As to expression, mainly expressed in brain, and then testis, heart and liver, almost all tissues showed some levels of the gene expression.

The protein localises to the golgi apparatus membrane. The catalysed reaction is a beta-D-Gal-(1-&gt;4)-beta-D-Glc-(1&lt;-&gt;1)-Cer(d18:1(4E)) + CMP-N-acetyl-beta-neuraminate = a ganglioside GM3 (d18:1(4E)) + CMP + H(+). It carries out the reaction ganglioside GA2 (d18:1(4E)/18:0) + CMP-N-acetyl-beta-neuraminate = ganglioside GM2 (d18:1(4E)/18:0) + CMP + H(+). The enzyme catalyses a beta-D-Gal-(1&lt;-&gt;1')-ceramide + CMP-N-acetyl-beta-neuraminate = N-acetyl-alpha-neuraminosyl-(2-&gt;3)-beta-D-galactosyl-(1&lt;-&gt;1')-ceramide + CMP + H(+). It catalyses the reaction ganglioside GA1 (d18:1(4E)/18:0) + CMP-N-acetyl-beta-neuraminate = ganglioside GM1 (d18:1(4E)/18:0) + CMP + H(+). Its function is as follows. (Microbial infection) Gangliosides GD1b and GT1b (derived from GM3) may serve as receptors for some C.botulinum neurotoxins (minimally types BoNT/A, B, C). In terms of biological role, transfers the sialyl group (N-acetyl-alpha-neuraminyl or NeuAc) from CMP-NeuAc to the non-reducing terminal galactose (Gal) of glycosphingolipids forming gangliosides (important molecules involved in the regulation of multiple cellular processes, including cell proliferation and differentiation, apoptosis, embryogenesis, development, and oncogenesis). Mainly involved in the biosynthesis of ganglioside GM3 but can also use different glycolipids as substrate acceptors such as D-galactosylceramide (GalCer), asialo-GM2 (GA2) and asialo-GM1 (GA1), although less preferentially than beta-D-Gal-(1-&gt;4)-beta-D-Glc-(1&lt;-&gt;1)-Cer (LacCer). The polypeptide is Lactosylceramide alpha-2,3-sialyltransferase (St3gal5) (Mus musculus (Mouse)).